A 614-amino-acid polypeptide reads, in one-letter code: Leucine-rich repeat and immunoglobulin-like domain-containing nogo receptor-interacting protein 1 (614 aa).

A signal peptide spans 1–35 (MLAGGVRSMPSPLLACWQPILLLVLGSVLSGSATG). 2 disulfide bridges follow: Cys-36-Cys-42 and Cys-40-Cys-51. One can recognise an LRRNT domain in the interval 36-65 (CPPRCECSAQDRAVLCHRKRFVAVPEGIPT). Topologically, residues 36–555 (CPPRCECSAQ…FDIKTLIIAT (520 aa)) are extracellular. 11 LRR repeats span residues 66–87 (ETRL…EFAS), 90–111 (HLEE…AFNN), 114–135 (NLRT…VFTG), 138–159 (NLTK…MFQD), 162–183 (NLKS…AFSG), 186–207 (SLEQ…ALSH), 210–231 (GLIV…SFKR), 258–279 (NLTS…AVRH), 282–303 (YLRF…MLHE), 306–327 (RLQE…AFRG), and 330–351 (YLRV…VFHS). Asn-138 carries N-linked (GlcNAc...) asparagine glycosylation. Asn-196 is a glycosylation site (N-linked (GlcNAc...) asparagine). N-linked (GlcNAc...) asparagine glycans are attached at residues Asn-258, Asn-268, and Asn-287. The N-linked (GlcNAc...) asparagine glycan is linked to Asn-335. In terms of domain architecture, LRRCT spans 363-417 (NPLACDCRLLWVFRRRWRLNFNRQQPTCATPEFVQGKEFKDFPDVLLPNYFTCRR). Disulfide bonds link Cys-367-Cys-390, Cys-369-Cys-415, and Cys-440-Cys-491. The 103-residue stretch at 405–507 (PDVLLPNYFT…GNDSMPAHLH (103 aa)) folds into the Ig-like C2-type domain. 2 N-linked (GlcNAc...) asparagine glycosylation sites follow: Asn-486 and Asn-536. A helical transmembrane segment spans residues 556–576 (TMGFISFLGVVLFCLVLLFLW). The Cytoplasmic segment spans residues 577 to 614 (SRGKGNTKHNIEIEYVPRKSDAGISSADAPRKFNMKMI). Ser-596 carries the post-translational modification Phosphoserine.

As to quaternary structure, homotetramer. Forms a ternary complex with RTN4R/NGFR and RTN4R/TNFRSF19. Interacts with NGRF, RTN4R and MYT1L. Post-translationally, N-glycosylated. Contains predominantly high-mannose glycans.

It is found in the cell membrane. In terms of biological role, functional component of the Nogo receptor signaling complex (RTN4R/NGFR) in RhoA activation responsible for some inhibition of axonal regeneration by myelin-associated factors. Is also an important negative regulator of oligodentrocyte differentiation and axonal myelination. Acts in conjunction with RTN4 and RTN4R in regulating neuronal precursor cell motility during cortical development. This Macaca fascicularis (Crab-eating macaque) protein is Leucine-rich repeat and immunoglobulin-like domain-containing nogo receptor-interacting protein 1 (LINGO1).